Consider the following 385-residue polypeptide: Non-structural maintenance of chromosomes element 4 homolog A (385 aa).

The segment at methionine 1 to aspartate 69 is disordered. Composition is skewed to basic and acidic residues over residues proline 10 to arginine 21 and serine 42 to leucine 55. The segment covering glutamate 56 to methionine 68 has biased composition (acidic residues). At threonine 345 the chain carries Phosphothreonine. A Phosphoserine modification is found at serine 377.

This sequence belongs to the NSE4 family. In terms of assembly, component of the SMC5-SMC6 complex which consists at least of SMC5, SMC6, NSMCE2, NSMCE1, NSMCE4A or EID3 and NSMCE3. NSMCE1, NSMCE4A or EID3 and NSMCE3 probably form a subcomplex that bridges the head domains of the SMC5:SMC6 heterodimer. Interacts with NSMCE3.

It localises to the nucleus. The protein resides in the chromosome. It is found in the telomere. In terms of biological role, component of the SMC5-SMC6 complex, a complex involved in DNA double-strand breaks by homologous recombination. The complex may promote sister chromatid homologous recombination by recruiting the SMC1-SMC3 cohesin complex to double-strand breaks. The complex is required for telomere maintenance via recombination in ALT (alternative lengthening of telomeres) cell lines and mediates sumoylation of shelterin complex (telosome) components which is proposed to lead to shelterin complex disassembly in ALT-associated PML bodies (APBs). Is involved in positive regulation of response to DNA damage stimulus. This is Non-structural maintenance of chromosomes element 4 homolog A (NSMCE4A) from Homo sapiens (Human).